The primary structure comprises 284 residues: 4-diphosphocytidyl-2-C-methyl-D-erythritol kinase (284 aa).

Lys9 is an active-site residue. 92 to 102 (PMGGGIGGGSS) lines the ATP pocket. Residue Asp134 is part of the active site.

The protein belongs to the GHMP kinase family. IspE subfamily.

It carries out the reaction 4-CDP-2-C-methyl-D-erythritol + ATP = 4-CDP-2-C-methyl-D-erythritol 2-phosphate + ADP + H(+). The protein operates within isoprenoid biosynthesis; isopentenyl diphosphate biosynthesis via DXP pathway; isopentenyl diphosphate from 1-deoxy-D-xylulose 5-phosphate: step 3/6. Its function is as follows. Catalyzes the phosphorylation of the position 2 hydroxy group of 4-diphosphocytidyl-2C-methyl-D-erythritol. This chain is 4-diphosphocytidyl-2-C-methyl-D-erythritol kinase, found in Stutzerimonas stutzeri (strain A1501) (Pseudomonas stutzeri).